The sequence spans 436 residues: Mannitol-binding protein (436 aa).

The signal sequence occupies residues 1–22; it reads MNDSIKACLAAACLALPLLAQG.

Belongs to the bacterial solute-binding protein 1 family.

The protein resides in the periplasm. Functionally, binds mannitol with high affinity. This chain is Mannitol-binding protein, found in Pseudomonas aeruginosa (strain ATCC 15692 / DSM 22644 / CIP 104116 / JCM 14847 / LMG 12228 / 1C / PRS 101 / PAO1).